The primary structure comprises 501 residues: ADP,ATP carrier protein 3 (501 aa).

12 helical membrane passes run 23-43 (LKLFIPMALMMLCILFNFGAL), 59-79 (IISLFKLWLVLPSCVIFTVLY), 90-110 (YIFYIIVGSFLLFFLLFAYII), 146-166 (YALMYIFSELWSAVVINLMFW), 183-203 (PVLGMVGNIGLIIAGSVLVFF), 227-247 (IMLQPIMSIIVAAGIIAMLLF), 293-313 (IALLIICYGLLINIVEGPWKA), 326-346 (FNFMGRFNIWMGISCVTFMVI), 361-381 (LLTPIMLSITGLMFFIFIIFI), 383-403 (EIGACFGDFNLLYAAIIVGAI), 446-466 (FGKSLGAFIQSLIFIIIPTAT), and 470-490 (IIIYLLVIFIVMMSLWIWNVI).

Belongs to the ADP/ATP translocase tlc family.

The protein resides in the cell membrane. Functionally, provides the rickettsial cell with host ATP in exchange for rickettsial ADP. This is an obligate exchange system. This energy acquiring activity is an important component of rickettsial parasitism. This chain is ADP,ATP carrier protein 3 (tlcC), found in Rickettsia felis (strain ATCC VR-1525 / URRWXCal2) (Rickettsia azadi).